The primary structure comprises 214 residues: MKKAEPRVIRLLMELRRMGVVDTRVLSAIERIPRALFVAEPFLDQAYENTALPIGCAQTISQPLVVGLMSQALEVGERMKVLEIGTGSGYQAAVLAKLCRRLYSVERHKPLLAEAEARFKHLRLHNITCRAADGSRGWPEQAPFDRIMVTAAAPDIPPALVDQLKPDGIMVLPLGDVGGIDQELVRITKTDRGIDIQPFLPVRFVPLVEGIPEE.

S61 is an active-site residue.

The protein belongs to the methyltransferase superfamily. L-isoaspartyl/D-aspartyl protein methyltransferase family.

The protein resides in the cytoplasm. It carries out the reaction [protein]-L-isoaspartate + S-adenosyl-L-methionine = [protein]-L-isoaspartate alpha-methyl ester + S-adenosyl-L-homocysteine. In terms of biological role, catalyzes the methyl esterification of L-isoaspartyl residues in peptides and proteins that result from spontaneous decomposition of normal L-aspartyl and L-asparaginyl residues. It plays a role in the repair and/or degradation of damaged proteins. This Paramagnetospirillum magneticum (strain ATCC 700264 / AMB-1) (Magnetospirillum magneticum) protein is Protein-L-isoaspartate O-methyltransferase.